A 300-amino-acid polypeptide reads, in one-letter code: 4-hydroxy-tetrahydrodipicolinate synthase (300 aa).

Residue Thr49 participates in pyruvate binding. Tyr137 (proton donor/acceptor) is an active-site residue. Lys165 serves as the catalytic Schiff-base intermediate with substrate. Ile207 is a pyruvate binding site.

Belongs to the DapA family. In terms of assembly, homotetramer; dimer of dimers.

The protein localises to the cytoplasm. It carries out the reaction L-aspartate 4-semialdehyde + pyruvate = (2S,4S)-4-hydroxy-2,3,4,5-tetrahydrodipicolinate + H2O + H(+). Its pathway is amino-acid biosynthesis; L-lysine biosynthesis via DAP pathway; (S)-tetrahydrodipicolinate from L-aspartate: step 3/4. Functionally, catalyzes the condensation of (S)-aspartate-beta-semialdehyde [(S)-ASA] and pyruvate to 4-hydroxy-tetrahydrodipicolinate (HTPA). This Nitrosospira multiformis (strain ATCC 25196 / NCIMB 11849 / C 71) protein is 4-hydroxy-tetrahydrodipicolinate synthase.